Reading from the N-terminus, the 311-residue chain is tRNA dimethylallyltransferase (311 aa).

Position 9 to 16 (9 to 16 (GPTAVGKT)) interacts with ATP. 11 to 16 (TAVGKT) is a binding site for substrate. The tract at residues 34–37 (DSMQ) is interaction with substrate tRNA.

Belongs to the IPP transferase family. In terms of assembly, monomer. Requires Mg(2+) as cofactor.

It catalyses the reaction adenosine(37) in tRNA + dimethylallyl diphosphate = N(6)-dimethylallyladenosine(37) in tRNA + diphosphate. In terms of biological role, catalyzes the transfer of a dimethylallyl group onto the adenine at position 37 in tRNAs that read codons beginning with uridine, leading to the formation of N6-(dimethylallyl)adenosine (i(6)A). This chain is tRNA dimethylallyltransferase, found in Clostridium botulinum (strain Okra / Type B1).